The chain runs to 972 residues: Structural polyprotein (972 aa).

Residue aspartate 26 participates in a divalent metal cation binding. One can recognise a Peptidase S50 domain in the interval 509–734 (SGSEAGSYSK…YLGQLMRTTA (226 aa)). The Nucleophile role is filled by serine 633. The active site involves lysine 674. 2 disordered regions span residues 797–817 (STPP…AQEA) and 917–972 (GGRG…DGEV). Basic and acidic residues predominate over residues 801-817 (KHQEKPKGPDQHTAQEA).

Homotrimer. A central divalent metal (possibly cobalt) stabilizes the VP2 trimer. As to quaternary structure, homodimer. interacts (via C-terminus) with VP1 in the cytoplasm. Interacts with VP2. Specific enzymatic cleavages yield mature proteins. Capsid assembly seems to be regulated by polyprotein processing. The protease VP4 cleaves itself off the polyprotein, thus releasing pre-VP2 and VP3 within the infected cell. During capsid assembly, the C-terminus of pre-VP2 is further processed by VP4, giving rise to VP2, the external capsid protein and three small peptides that all stay closely associated with the capsid.

It localises to the virion. Its subcellular location is the host cytoplasm. Capsid protein VP2 self assembles to form an icosahedral capsid with a T=13 symmetry, about 70 nm in diameter, and consisting of 260 VP2 trimers. The capsid encapsulates the genomic dsRNA. VP2 is also involved in attachment and entry into the host cell. Its function is as follows. The precursor of VP2 plays an important role in capsid assembly. First, pre-VP2 and VP2 oligomers assemble to form a procapsid. Then, the pre-VP2 intermediates may be processed into VP2 proteins by proteolytic cleavage mediated by VP4 to obtain the mature virion. The final capsid is composed of pentamers and hexamers but VP2 has a natural tendency to assemble into all-pentameric structures. Therefore pre-VP2 may be required to allow formation of the hexameric structures. Functionally, protease VP4 is a serine protease that cleaves the polyprotein into its final products. Pre-VP2 is first partially cleaved, and may be completely processed by VP4 upon capsid maturation. In terms of biological role, capsid protein VP3 plays a key role in virion assembly by providing a scaffold for the capsid composed of VP2. May self-assemble to form a T=4-like icosahedral inner-capsid composed of at least 180 trimers. Plays a role in genomic RNA packaging by recruiting VP1 into the capsid and interacting with the dsRNA genome segments to form a ribonucleoprotein complex. Additionally, the interaction of the VP3 C-terminal tail with VP1 removes the inherent structural blockade of the polymerase active site. Thus, VP3 can also function as a transcriptional activator. Structural peptide 1 is a small peptide derived from the C-terminus of pre-VP2. It destabilizes and perforates cell membranes, suggesting a role during viral entry. Its function is as follows. Structural peptide 2 is a small peptide derived from the C-terminus of pre-VP2. It is not essential for virus viability, but viral growth is affected when this protein is absent. Functionally, structural peptide 3 is a small peptide derived from pre-VP2 C-terminus. It is not essential for virus viability, but viral growth is affected when this protein is absent. The chain is Structural polyprotein from Oncorhynchus mykiss (Rainbow trout).